The sequence spans 306 residues: Recombination-associated protein RdgC (306 aa).

Belongs to the RdgC family.

It is found in the cytoplasm. The protein resides in the nucleoid. Functionally, may be involved in recombination. The chain is Recombination-associated protein RdgC from Pseudomonas fluorescens (strain Pf0-1).